Consider the following 226-residue polypeptide: ATP-dependent dethiobiotin synthetase BioD (226 aa).

12–17 (GVGKTV) serves as a coordination point for ATP. A Mg(2+)-binding site is contributed by T16. Residue K37 is part of the active site. Residue T41 coordinates substrate. ATP is bound by residues D49, 108–111 (EGAG), 169–170 (GS), and 197–199 (PAG). D49 and E108 together coordinate Mg(2+).

It belongs to the dethiobiotin synthetase family. Homodimer. Mg(2+) is required as a cofactor.

It localises to the cytoplasm. The catalysed reaction is (7R,8S)-7,8-diammoniononanoate + CO2 + ATP = (4R,5S)-dethiobiotin + ADP + phosphate + 3 H(+). It functions in the pathway cofactor biosynthesis; biotin biosynthesis; biotin from 7,8-diaminononanoate: step 1/2. In terms of biological role, catalyzes a mechanistically unusual reaction, the ATP-dependent insertion of CO2 between the N7 and N8 nitrogen atoms of 7,8-diaminopelargonic acid (DAPA, also called 7,8-diammoniononanoate) to form a ureido ring. This is ATP-dependent dethiobiotin synthetase BioD from Mycobacterium bovis (strain BCG / Pasteur 1173P2).